Here is a 374-residue protein sequence, read N- to C-terminus: Putative clathrin assembly protein At1g33340 (374 aa).

An ENTH domain is found at 30-163; the sequence is YNEKAFFDIE…GWIINQAGKL (134 aa).

The protein localises to the membrane. It is found in the clathrin-coated pit. Its subcellular location is the golgi apparatus. It localises to the cytoplasmic vesicle. The protein resides in the clathrin-coated vesicle. This is Putative clathrin assembly protein At1g33340 from Arabidopsis thaliana (Mouse-ear cress).